Reading from the N-terminus, the 136-residue chain is Ribosome-binding factor A (136 aa).

Belongs to the RbfA family. In terms of assembly, monomer. Binds 30S ribosomal subunits, but not 50S ribosomal subunits or 70S ribosomes.

It localises to the cytoplasm. One of several proteins that assist in the late maturation steps of the functional core of the 30S ribosomal subunit. Associates with free 30S ribosomal subunits (but not with 30S subunits that are part of 70S ribosomes or polysomes). Required for efficient processing of 16S rRNA. May interact with the 5'-terminal helix region of 16S rRNA. The polypeptide is Ribosome-binding factor A (Yersinia pestis bv. Antiqua (strain Antiqua)).